Consider the following 218-residue polypeptide: 3,4-dihydroxy-2-butanone 4-phosphate synthase (218 aa).

D-ribulose 5-phosphate contacts are provided by residues R38–E39, D43, R151–T155, and E175. Mg(2+) is bound at residue E39. A Mg(2+)-binding site is contributed by H154.

The protein belongs to the DHBP synthase family. In terms of assembly, homodimer. The cofactor is Mg(2+). It depends on Mn(2+) as a cofactor.

It catalyses the reaction D-ribulose 5-phosphate = (2S)-2-hydroxy-3-oxobutyl phosphate + formate + H(+). Its pathway is cofactor biosynthesis; riboflavin biosynthesis; 2-hydroxy-3-oxobutyl phosphate from D-ribulose 5-phosphate: step 1/1. Functionally, catalyzes the conversion of D-ribulose 5-phosphate to formate and 3,4-dihydroxy-2-butanone 4-phosphate. In Vibrio cholerae serotype O1 (strain M66-2), this protein is 3,4-dihydroxy-2-butanone 4-phosphate synthase.